Here is a 454-residue protein sequence, read N- to C-terminus: Carbon catabolite repressor protein 4 homolog 5 (454 aa).

The disordered stretch occupies residues 1–76 (MSGYERKNTT…SLRRRRRTKE (76 aa)). Residues 31–41 (VYEKSNRKESI) are compositionally biased toward basic and acidic residues. The span at 61–75 (VRHSKSSLRRRRRTK) shows a compositional bias: basic residues. Mg(2+) is bound at residue E153.

The protein belongs to the CCR4/nocturin family. In terms of assembly, component of the CCR4-NOT complex, at least composed of CRR4 and CAF1 proteins. Requires Mg(2+) as cofactor.

It is found in the nucleus. Its subcellular location is the cytoplasm. The catalysed reaction is Exonucleolytic cleavage of poly(A) to 5'-AMP.. In terms of biological role, acts as a catalytic component of the CCR4-NOT core complex, which in the nucleus seems to be a general transcription factor, and in the cytoplasm the major mRNA deadenylase involved in mRNA turnover. In Arabidopsis thaliana (Mouse-ear cress), this protein is Carbon catabolite repressor protein 4 homolog 5 (CCR4-5).